We begin with the raw amino-acid sequence, 278 residues long: Elongation factor Ts (278 aa).

Residues 79–82 form an involved in Mg(2+) ion dislocation from EF-Tu region; that stretch reads TDFV.

This sequence belongs to the EF-Ts family.

The protein resides in the cytoplasm. Associates with the EF-Tu.GDP complex and induces the exchange of GDP to GTP. It remains bound to the aminoacyl-tRNA.EF-Tu.GTP complex up to the GTP hydrolysis stage on the ribosome. The protein is Elongation factor Ts of Borrelia duttonii (strain Ly).